Consider the following 175-residue polypeptide: MGSKMSDPLVIGRVIGEVVDYFTPSVKMSVTYNSSKHVYNGHELFPSSVTSKPRVEVHGGDLRSFFTLIMIDPDVPGPSDPYLREHLHWIVTDIPGTTDCSFGREIVGYEMPRPNIGIHRFVFLLFKQKKRQTLLSAPLSRDRFNTRKFSEENELGSPVAAAFFNCQRETAARRR.

The protein belongs to the phosphatidylethanolamine-binding protein family. Expressed in vegetative axillary meristems but not in the main shoot meristem.

The protein localises to the cytoplasm. Functionally, may form complexes with phosphorylated ligands by interfering with kinases and their effectors. The protein is CEN-like protein 4 (CET4) of Nicotiana tabacum (Common tobacco).